We begin with the raw amino-acid sequence, 225 residues long: GrpE protein homolog 2, mitochondrial (225 aa).

A mitochondrion-targeting transit peptide spans 1-32; it reads MAVRSLWAGRLRVQRLLAWSAAWESKGWPLPF. Lys-142 is subject to N6-acetyllysine.

Belongs to the GrpE family. As to quaternary structure, probable component of the PAM complex at least composed of a mitochondrial HSP70 protein, GRPEL1 or GRPEL2, TIMM44, TIMM16/PAM16 and TIMM14/DNAJC19.

The protein localises to the mitochondrion matrix. Essential component of the PAM complex, a complex required for the translocation of transit peptide-containing proteins from the inner membrane into the mitochondrial matrix in an ATP-dependent manner. Seems to control the nucleotide-dependent binding of mitochondrial HSP70 to substrate proteins. Stimulates ATPase activity of mt-HSP70. May also serve to modulate the interconversion of oligomeric (inactive) and monomeric (active) forms of mt-HSP70. In Homo sapiens (Human), this protein is GrpE protein homolog 2, mitochondrial (GRPEL2).